A 352-amino-acid chain; its full sequence is Methylthioribose-1-phosphate isomerase (352 aa).

Residues 49–51 (RGA), Arg-93, and Gln-202 contribute to the substrate site. Asp-243 serves as the catalytic Proton donor. Residue 253–254 (NK) participates in substrate binding.

The protein belongs to the eIF-2B alpha/beta/delta subunits family. MtnA subfamily.

The catalysed reaction is 5-(methylsulfanyl)-alpha-D-ribose 1-phosphate = 5-(methylsulfanyl)-D-ribulose 1-phosphate. It participates in amino-acid biosynthesis; L-methionine biosynthesis via salvage pathway; L-methionine from S-methyl-5-thio-alpha-D-ribose 1-phosphate: step 1/6. Functionally, catalyzes the interconversion of methylthioribose-1-phosphate (MTR-1-P) into methylthioribulose-1-phosphate (MTRu-1-P). This is Methylthioribose-1-phosphate isomerase from Magnetococcus marinus (strain ATCC BAA-1437 / JCM 17883 / MC-1).